Reading from the N-terminus, the 261-residue chain is Small ribosomal subunit protein uS2 (261 aa).

The protein belongs to the universal ribosomal protein uS2 family.

The chain is Small ribosomal subunit protein uS2 from Enterococcus faecalis (strain ATCC 700802 / V583).